The sequence spans 197 residues: Protein GrpE (197 aa).

Over residues 1 to 31 (MSDDTKKQDTAADAEVEKEMEGVPEHLRDDR) the composition is skewed to basic and acidic residues. Residues 1–48 (MSDDTKKQDTAADAEVEKEMEGVPEHLRDDRGSEEDASDDLSAALESL) are disordered.

It belongs to the GrpE family. Homodimer.

The protein localises to the cytoplasm. Its function is as follows. Participates actively in the response to hyperosmotic and heat shock by preventing the aggregation of stress-denatured proteins, in association with DnaK and GrpE. It is the nucleotide exchange factor for DnaK and may function as a thermosensor. Unfolded proteins bind initially to DnaJ; upon interaction with the DnaJ-bound protein, DnaK hydrolyzes its bound ATP, resulting in the formation of a stable complex. GrpE releases ADP from DnaK; ATP binding to DnaK triggers the release of the substrate protein, thus completing the reaction cycle. Several rounds of ATP-dependent interactions between DnaJ, DnaK and GrpE are required for fully efficient folding. The sequence is that of Protein GrpE from Erythrobacter litoralis (strain HTCC2594).